Consider the following 352-residue polypeptide: Ketoisovalerate oxidoreductase subunit VorB (352 aa).

Heterotrimer of the VorA, VorB and VorC subunits.

The catalysed reaction is 3-methyl-2-oxobutanoate + 2 oxidized [2Fe-2S]-[ferredoxin] + CoA = 2-methylpropanoyl-CoA + 2 reduced [2Fe-2S]-[ferredoxin] + CO2 + H(+). The chain is Ketoisovalerate oxidoreductase subunit VorB (vorB) from Methanothermobacter thermautotrophicus (strain ATCC 29096 / DSM 1053 / JCM 10044 / NBRC 100330 / Delta H) (Methanobacterium thermoautotrophicum).